The sequence spans 1482 residues: Chromosome partition protein MukB (1482 aa).

Position 34-41 (34-41) interacts with ATP; it reads GGNGAGKS. Coiled-coil stretches lie at residues 337-418, 444-472, 509-601, 781-805, 835-1116, and 1210-1265; these read LNLV…QYQQ, LDTY…QTAH, RHLA…TSHA, AARE…ATLS, EAEI…AKAG, and EAIE…LQSV. Residues 666–783 form a flexible hinge region; it reads PGGAEDARLN…SVPLFGRAAR (118 aa). Positions 1049 to 1077 are disordered; the sequence is ADAGAEERARQRRDELHTRLSNNRSRRNQ. A compositionally biased stretch (basic and acidic residues) spans 1051–1066; sequence AGAEERARQRRDELHT.

This sequence belongs to the SMC family. MukB subfamily. In terms of assembly, homodimerization via its hinge domain. Binds to DNA via its C-terminal region. Interacts, and probably forms a ternary complex, with MukE and MukF via its C-terminal region. The complex formation is stimulated by calcium or magnesium. Interacts with tubulin-related protein FtsZ.

It is found in the cytoplasm. Its subcellular location is the nucleoid. In terms of biological role, plays a central role in chromosome condensation, segregation and cell cycle progression. Functions as a homodimer, which is essential for chromosome partition. Involved in negative DNA supercoiling in vivo, and by this means organize and compact chromosomes. May achieve or facilitate chromosome segregation by condensation DNA from both sides of a centrally located replisome during cell division. This is Chromosome partition protein MukB from Cronobacter sakazakii (strain ATCC BAA-894) (Enterobacter sakazakii).